A 335-amino-acid chain; its full sequence is MQTVLKYLLLIMCGSFCASEELQNQTNVPAIFFSYKLTPGILKYQEDYDRAVTLPRDTFIEAAEKFLGVCNADTYVFINQPGLRKLDFLEFETEFVSLQRYIRRSSTAIKFEKVDLLPQDLYYDLAEFVKEYCNVDQVLNLRGNNTEDFQPFIDSEKRVIIIEYPKLPEDTNERKEAFRHYDKYLRTILAQIPSPEQNVIYTSLNPGTTLAHESIIPIQIFPDIFDIKSRVGEVEQNNRVLDVPRLSFNDYTPRFSEPPSEYVSIFDSQLIENNRGLLQLIFTILVGYILIQFFFTKKTIVDEKITNKKDNVKQTSPQLLKKVQEIQKKPSQQVS.

An N-terminal signal peptide occupies residues 1-17; it reads MQTVLKYLLLIMCGSFC. Topologically, residues 20-275 are lumenal; it reads EELQNQTNVP…FDSQLIENNR (256 aa). N-linked (GlcNAc...) asparagine glycans are attached at residues Asn24 and Asn144. The chain crosses the membrane as a helical span at residues 276–296; that stretch reads GLLQLIFTILVGYILIQFFFT. At 297-335 the chain is on the cytoplasmic side; sequence KKTIVDEKITNKKDNVKQTSPQLLKKVQEIQKKPSQQVS.

This sequence belongs to the BIG1 family. N-glycosylated.

It localises to the endoplasmic reticulum membrane. In terms of biological role, required for normal beta-1,6-glucan synthesis. The protein is Protein BIG1 (BIG1) of Saccharomyces cerevisiae (strain ATCC 204508 / S288c) (Baker's yeast).